We begin with the raw amino-acid sequence, 594 residues long: Metastasis-associated protein MTA3 (594 aa).

The BAH domain occupies 1–147 (MAANMYRVGD…PSLKTLLADK (147 aa)). The 112-residue stretch at 148–259 (GEIRVGPRYQ…SAISVLVPLG (112 aa)) folds into the ELM2 domain. Residues 266–318 (DEMEEWSASEASLFEEALEKYGKDFNDIRQDFLPWKSLTSIIEYYYMWKTTDR) form the SANT domain. The GATA-type; atypical zinc finger occupies 379 to 406 (CESCYATQSHQWYSWGPPNMQCRLCAIC). Phosphoserine occurs at positions 428 and 430. T455 carries the phosphothreonine modification. Phosphoserine is present on S519.

It belongs to the metastasis-associated protein family. In terms of assembly, component of the nucleosome remodeling and deacetylase (NuRD) repressor complex, composed of core proteins MTA1, MTA2, MTA3, RBBP4, RBBP7, HDAC1, HDAC2, MBD2, MBD3, and peripherally associated proteins CDK2AP1, CDK2AP2, GATAD2A, GATAD2B, CHD3, CHD4 and CHD5. The exact stoichiometry of the NuRD complex is unknown, and some subunits such as MBD2 and MBD3, GATAD2A and GATAD2B, and CHD3, CHD4 and CHD5 define mutually exclusive NuRD complexes. Interacts with BCL6. Interacts with NACC2. Interacts with PWWP2B. As to expression, expressed in germinal centers of lymphoid tissues. No expression in nonepithelial cells.

The protein localises to the nucleus. It localises to the cytoplasm. In terms of biological role, acts as a component of the histone deacetylase NuRD complex which participates in the remodeling of chromatin. Plays a role in maintenance of the normal epithelial architecture through the repression of SNAI1 transcription in a histone deacetylase-dependent manner, and thus the regulation of E-cadherin levels. Contributes to transcriptional repression by BCL6. The sequence is that of Metastasis-associated protein MTA3 (MTA3) from Homo sapiens (Human).